The following is a 311-amino-acid chain: Urease accessory protein UreD (311 aa).

This sequence belongs to the UreD family. In terms of assembly, ureD, UreF and UreG form a complex that acts as a GTP-hydrolysis-dependent molecular chaperone, activating the urease apoprotein by helping to assemble the nickel containing metallocenter of UreC. The UreE protein probably delivers the nickel.

The protein resides in the cytoplasm. In terms of biological role, required for maturation of urease via the functional incorporation of the urease nickel metallocenter. The protein is Urease accessory protein UreD of Parasynechococcus marenigrum (strain WH8102).